Consider the following 133-residue polypeptide: MQRVTITLDDDLLETLDSLSQRRGYNNRSEAIRDILRGALAQEATQEHGTYGFAVLSYVYEHEKRDLASRIVSTQHHHHELSVATLHVHINHDDCLEIAVLKGDMGDVQHFADDVIAQRGVRHGHLQCLPKED.

Ni(2+)-binding residues include His76, His87, His89, and Cys95.

Belongs to the transcriptional regulatory CopG/NikR family. In terms of assembly, homotetramer. Ni(2+) serves as cofactor.

In terms of biological role, transcriptional repressor of the nikABCDE operon. Is active in the presence of excessive concentrations of intracellular nickel. This Salmonella arizonae (strain ATCC BAA-731 / CDC346-86 / RSK2980) protein is Nickel-responsive regulator.